The sequence spans 786 residues: Wall-associated receptor kinase-like 17 (786 aa).

The first 30 residues, 1-30 (MSYKNTNNSHLILFKLLLLLILYSADLTAS), serve as a signal peptide directing secretion. At 31 to 369 (SSCRSECGGC…YRCVGDKTKA (339 aa)) the chain is on the extracellular side. Residues N69, N122, N160, N165, and N274 are each glycosylated (N-linked (GlcNAc...) asparagine). The interval 301-362 (CICDYTMSII…CVNFEGGYRC (62 aa)) is atypical EGF-like. Intrachain disulfides connect C303–C318, C340–C353, and C347–C362. A helical transmembrane segment spans residues 370-390 (IMIGAGTGFGVLVLVGGVWWL). The Cytoplasmic portion of the chain corresponds to 391–786 (RKFLVKRRMA…VEPLNPLLTW (396 aa)). A Phosphothreonine modification is found at T433. Positions 444–719 (FSENRVLGHG…REVFTELERI (276 aa)) constitute a Protein kinase domain. ATP is bound by residues 450–458 (LGHGGQGTV) and K472. Y517 is modified (phosphotyrosine). D570 serves as the catalytic Proton acceptor. T604 and T609 each carry phosphothreonine. Phosphotyrosine is present on Y617. Positions 766–775 (SSIVASPPSS) are enriched in low complexity. A disordered region spans residues 766 to 786 (SSIVASPPSSDVEPLNPLLTW).

This sequence belongs to the protein kinase superfamily. Ser/Thr protein kinase family.

It is found in the membrane. The enzyme catalyses L-seryl-[protein] + ATP = O-phospho-L-seryl-[protein] + ADP + H(+). It catalyses the reaction L-threonyl-[protein] + ATP = O-phospho-L-threonyl-[protein] + ADP + H(+). Serine/threonine-protein kinase that may function as a signaling receptor of extracellular matrix component. The polypeptide is Wall-associated receptor kinase-like 17 (WAKL17) (Arabidopsis thaliana (Mouse-ear cress)).